The primary structure comprises 252 residues: tRNA (guanine-N(1)-)-methyltransferase (252 aa).

S-adenosyl-L-methionine contacts are provided by residues Gly113 and 133-138 (LGDYVL).

This sequence belongs to the RNA methyltransferase TrmD family. As to quaternary structure, homodimer.

The protein localises to the cytoplasm. It catalyses the reaction guanosine(37) in tRNA + S-adenosyl-L-methionine = N(1)-methylguanosine(37) in tRNA + S-adenosyl-L-homocysteine + H(+). Functionally, specifically methylates guanosine-37 in various tRNAs. This Stenotrophomonas maltophilia (strain K279a) protein is tRNA (guanine-N(1)-)-methyltransferase.